A 297-amino-acid polypeptide reads, in one-letter code: tRNA-cytidine(32) 2-sulfurtransferase (297 aa).

The PP-loop motif motif lies at 61-66; it reads SGGKDS. [4Fe-4S] cluster contacts are provided by C136, C139, and C227.

Belongs to the TtcA family. In terms of assembly, homodimer. The cofactor is Mg(2+). Requires [4Fe-4S] cluster as cofactor.

Its subcellular location is the cytoplasm. It carries out the reaction cytidine(32) in tRNA + S-sulfanyl-L-cysteinyl-[cysteine desulfurase] + AH2 + ATP = 2-thiocytidine(32) in tRNA + L-cysteinyl-[cysteine desulfurase] + A + AMP + diphosphate + H(+). It functions in the pathway tRNA modification. In terms of biological role, catalyzes the ATP-dependent 2-thiolation of cytidine in position 32 of tRNA, to form 2-thiocytidine (s(2)C32). The sulfur atoms are provided by the cysteine/cysteine desulfurase (IscS) system. This is tRNA-cytidine(32) 2-sulfurtransferase from Paracoccus denitrificans (strain Pd 1222).